The sequence spans 593 residues: Ribonuclease Y (593 aa).

The helical transmembrane segment at 6–26 (ILLMYLIVGLLTALTVLIFVF) threads the bilayer. The region spanning 218-278 (DPIKVKKVTD…IKLEVAYNAL (61 aa)) is the KH domain. The HD domain maps to 354 to 464 (VLTHSIEAAQ…TKIADFLSAA (111 aa)).

Belongs to the RNase Y family.

The protein resides in the cell membrane. Its function is as follows. Endoribonuclease that initiates mRNA decay. This chain is Ribonuclease Y, found in Mycoplasmoides gallisepticum (strain R(low / passage 15 / clone 2)) (Mycoplasma gallisepticum).